The primary structure comprises 321 residues: Chemotaxis protein CheV1 (321 aa).

A CheW-like domain is found at 19–177 (ELQLLCFRLG…IEKMLIDVFP (159 aa)). One can recognise a Response regulatory domain in the interval 198-319 (CVLLADDSPS…IQRVVKQFLE (122 aa)). Asp252 bears the 4-aspartylphosphate mark.

Its function is as follows. Plays an essential role in chemotaxis signal transduction system in order to colonize the host stomach. May act as a phosphate sink to control the flow of phosphate to CheAY. This is Chemotaxis protein CheV1 from Helicobacter pylori (strain ATCC 700392 / 26695) (Campylobacter pylori).